The following is a 492-amino-acid chain: MALNSGSPPAIGPYYENHGYQPENPYPAQPTVVPTVYEVHPAQYYPSPVPQYAPRVLTQASNPVVCTQPKSPSGTVCTSKTKKALCITLTLGTFLVGAALAAGLLWKFMGSKCSNSGIECDSSGTCINPSNWCDGVSHCPGGEDENRCVRLYGPNFILQVYSSQRKSWHPVCQDDWNENYGRAACRDMGYKNNFYSSQGIVDDSGSTSFMKLNTSAGNVDIYKKLYHSDACSSKAVVSLRCIACGVNLNSSRQSRIVGGESALPGAWPWQVSLHVQNVHVCGGSIITPEWIVTAAHCVEKPLNNPWHWTAFAGILRQSFMFYGAGYQVEKVISHPNYDSKTKNNDIALMKLQKPLTFNDLVKPVCLPNPGMMLQPEQLCWISGWGATEEKGKTSEVLNAAKVLLIETQRCNSRYVYDNLITPAMICAGFLQGNVDSCQGDSGGPLVTSKNNIWWLIGDTSWGSGCAKAYRPGVYGNVMVFTDWIYRQMRADG.

The Cytoplasmic portion of the chain corresponds to 1 to 84; that stretch reads MALNSGSPPA…TVCTSKTKKA (84 aa). A helical; Signal-anchor for type II membrane protein membrane pass occupies residues 85 to 105; it reads LCITLTLGTFLVGAALAAGLL. Over 106–492 the chain is Extracellular; sequence WKFMGSKCSN…WIYRQMRADG (387 aa). Cystine bridges form between C113–C126, C120–C139, C133–C148, C172–C231, C185–C241, C244–C365, C281–C297, C410–C426, and C437–C465. Residues 118 to 148 form the LDL-receptor class A domain; that stretch reads IECDSSGTCINPSNWCDGVSHCPGGEDENRC. Residues N131, D134, V136, D144, and E145 each coordinate Ca(2+). The 94-residue stretch at 149 to 242 folds into the SRCR domain; the sequence is VRLYGPNFIL…SKAVVSLRCI (94 aa). N-linked (GlcNAc...) asparagine glycans are attached at residues N213 and N249. One can recognise a Peptidase S1 domain in the interval 256 to 492; it reads IVGGESALPG…WIYRQMRADG (237 aa). Catalysis depends on charge relay system residues H296 and D345. The tract at residues 340-470 is HKU1-CoV S protein-binding; sequence KTKNNDIALM…WGSGCAKAYR (131 aa). The active-site Charge relay system is the S441.

The protein belongs to the peptidase S1 family. The catalytically active form interacts with ACE2. Proteolytically processed; by an autocatalytic mechanism. Autocleavage induces active conformation. As to expression, expressed in several tissues that comprise large populations of epithelial cells with the highest level of transcripts measured in the prostate gland. Expressed in type II pneumocytes in the lung (at protein level). Expressed strongly in small intestine. Also expressed in colon, stomach and salivary gland. Coexpressed with ACE2 within lung type II pneumocytes, ileal absorptive enterocytes, intestinal epithelial cells, cornea, gallbladder and nasal goblet secretory cells.

It is found in the cell membrane. The protein resides in the secreted. The enzyme catalyses The enzyme cleaves angiotensin-converting enzyme 2 (EC 3.4.17.23) and cleaves influenzea A and B virus and coronavirus spike glycoproteins at arginine residues.. Its function is as follows. Plasma membrane-anchored serine protease that cleaves at arginine residues. Participates in proteolytic cascades of relevance for the normal physiologic function of the prostate. Androgen-induced TMPRSS2 activates several substrates that include pro-hepatocyte growth factor/HGF, the protease activated receptor-2/F2RL1 or matriptase/ST14 leading to extracellular matrix disruption and metastasis of prostate cancer cells. In addition, activates trigeminal neurons and contribute to both spontaneous pain and mechanical allodynia. Functionally, (Microbial infection) Facilitates human coronaviruses SARS-CoV and SARS-CoV-2 infections via two independent mechanisms, proteolytic cleavage of ACE2 receptor which promotes viral uptake, and cleavage of coronavirus spike glycoproteins which activates the glycoprotein for host cell entry. The cleavage of SARS-COV2 spike glycoprotein occurs between the S2 and S2' site. Upon SARS-CoV-2 infection, increases syncytia formation by accelerating the fusion process. Proteolytically cleaves and activates the spike glycoproteins of human coronavirus 229E (HCoV-229E) and human coronavirus EMC (HCoV-EMC) and the fusion glycoproteins F0 of Sendai virus (SeV), human metapneumovirus (HMPV), human parainfluenza 1, 2, 3, 4a and 4b viruses (HPIV). Essential for spread and pathogenesis of influenza A virus (strains H1N1, H3N2 and H7N9); involved in proteolytic cleavage and activation of hemagglutinin (HA) protein which is essential for viral infectivity. (Microbial infection) Receptor for human coronavirus HKU1-CoV, acts synergistically with disialoside glycans to facilitate the entry of the virus. After binding to cell-surface disialoside glycans, the viral S protein interacts with the inactive form of TMPRSS2 and inhibits its protease activity. This Homo sapiens (Human) protein is Transmembrane protease serine 2.